The following is a 76-amino-acid chain: Small ribosomal subunit protein bS21C (76 aa).

Residues 52-76 (GRQRKLARKQMQREGLLPTKPRKDK) are disordered.

It belongs to the bacterial ribosomal protein bS21 family.

The sequence is that of Small ribosomal subunit protein bS21C (rpsU3) from Agrobacterium fabrum (strain C58 / ATCC 33970) (Agrobacterium tumefaciens (strain C58)).